The following is a 548-amino-acid chain: Probable malate:quinone oxidoreductase (548 aa).

The segment at 521–548 (DKPQAADSTPKPQLKPQPVQKEVADIAL) is disordered. Over residues 530–541 (PKPQLKPQPVQK) the composition is skewed to low complexity.

The protein belongs to the MQO family. FAD is required as a cofactor.

It catalyses the reaction (S)-malate + a quinone = a quinol + oxaloacetate. Its pathway is carbohydrate metabolism; tricarboxylic acid cycle; oxaloacetate from (S)-malate (quinone route): step 1/1. This is Probable malate:quinone oxidoreductase from Escherichia coli O17:K52:H18 (strain UMN026 / ExPEC).